Here is a 330-residue protein sequence, read N- to C-terminus: tRNA (guanine(37)-N(1))-methyltransferase Trm5b (330 aa).

S-adenosyl-L-methionine-binding positions include Arg-173, 211–212 (DI), 238–239 (DS), and Asn-252.

This sequence belongs to the class I-like SAM-binding methyltransferase superfamily. TRM5/TYW2 family.

The protein resides in the cytoplasm. The catalysed reaction is guanosine(37) in tRNA + S-adenosyl-L-methionine = N(1)-methylguanosine(37) in tRNA + S-adenosyl-L-homocysteine + H(+). Functionally, specifically methylates the N1 position of guanosine-37 in various tRNAs. This is tRNA (guanine(37)-N(1))-methyltransferase Trm5b from Pyrococcus abyssi (strain GE5 / Orsay).